The following is a 282-amino-acid chain: tRNA uridine(34) hydroxylase (282 aa).

The Rhodanese domain occupies 128–222 (EGRPVVMLDT…YFEEVGGSHY (95 aa)). Residue C182 is the Cysteine persulfide intermediate of the active site.

Belongs to the TrhO family.

It catalyses the reaction uridine(34) in tRNA + AH2 + O2 = 5-hydroxyuridine(34) in tRNA + A + H2O. Catalyzes oxygen-dependent 5-hydroxyuridine (ho5U) modification at position 34 in tRNAs. This chain is tRNA uridine(34) hydroxylase, found in Cupriavidus necator (strain ATCC 17699 / DSM 428 / KCTC 22496 / NCIMB 10442 / H16 / Stanier 337) (Ralstonia eutropha).